We begin with the raw amino-acid sequence, 939 residues long: Translation initiation factor IF-2 (939 aa).

Residues 81–94 show a composition bias toward basic and acidic residues; that stretch reads EEQSRKAYEKEQQL. Disordered stretches follow at residues 81-303 and 316-337; these read EEQS…KKVE and TISG…KMRR. The span at 99–108 shows a compositional bias: low complexity; sequence SSAPSPAPAA. Basic and acidic residues-rich tracts occupy residues 112–127 and 148–173; these read EPVK…RHEP and SPKE…EKAA. Residues 178–189 show a composition bias toward low complexity; it reads EAQPEAQSQQEP. The segment covering 244-255 has biased composition (basic and acidic residues); that stretch reads FKENAAELKDEF. The segment covering 276–287 has biased composition (low complexity); that stretch reads AAGEGESTTGGE. The span at 292 to 301 shows a compositional bias: basic residues; sequence KKKKGKKKKK. Low complexity predominate over residues 318–328; that stretch reads SGMDDSGSSGS. The 171-residue stretch at 436-606 folds into the tr-type G domain; sequence TRPPVVTIMG…LTEAEVRELK (171 aa). Residues 445-452 form a G1 region; that stretch reads GHVDHGKT. 445–452 lines the GTP pocket; sequence GHVDHGKT. Positions 470 to 474 are G2; sequence GITQH. A G3 region spans residues 492–495; it reads DTPG. Residues 492 to 496 and 546 to 549 contribute to the GTP site; these read DTPGH and NKID. Residues 546–549 form a G4 region; sequence NKID. Positions 582 to 584 are G5; the sequence is SAK.

This sequence belongs to the TRAFAC class translation factor GTPase superfamily. Classic translation factor GTPase family. IF-2 subfamily.

It is found in the cytoplasm. Its function is as follows. One of the essential components for the initiation of protein synthesis. Protects formylmethionyl-tRNA from spontaneous hydrolysis and promotes its binding to the 30S ribosomal subunits. Also involved in the hydrolysis of GTP during the formation of the 70S ribosomal complex. This chain is Translation initiation factor IF-2, found in Chlorobaculum parvum (strain DSM 263 / NCIMB 8327) (Chlorobium vibrioforme subsp. thiosulfatophilum).